We begin with the raw amino-acid sequence, 429 residues long: Enolase (429 aa).

Gln-162 contacts (2R)-2-phosphoglycerate. Glu-204 functions as the Proton donor in the catalytic mechanism. Asp-241, Glu-283, and Asp-310 together coordinate Mg(2+). Lys-335, Arg-364, Ser-365, and Lys-386 together coordinate (2R)-2-phosphoglycerate. Lys-335 (proton acceptor) is an active-site residue.

Belongs to the enolase family. The cofactor is Mg(2+).

It is found in the cytoplasm. It localises to the secreted. Its subcellular location is the cell surface. The catalysed reaction is (2R)-2-phosphoglycerate = phosphoenolpyruvate + H2O. It participates in carbohydrate degradation; glycolysis; pyruvate from D-glyceraldehyde 3-phosphate: step 4/5. In terms of biological role, catalyzes the reversible conversion of 2-phosphoglycerate (2-PG) into phosphoenolpyruvate (PEP). It is essential for the degradation of carbohydrates via glycolysis. This is Enolase from Mycolicibacterium gilvum (strain PYR-GCK) (Mycobacterium gilvum (strain PYR-GCK)).